The sequence spans 58 residues: Small ribosomal subunit protein bS21 (58 aa).

Belongs to the bacterial ribosomal protein bS21 family.

In Synechococcus sp. (strain CC9605), this protein is Small ribosomal subunit protein bS21.